A 211-amino-acid polypeptide reads, in one-letter code: 2,3-bisphosphoglycerate-dependent phosphoglycerate mutase (211 aa).

Substrate is bound by residues 9-16 (RHGQSDWN), 22-23 (TG), Arg61, 88-91 (ERDY), Lys99, 115-116 (RR), and 159-160 (GN). His10 (tele-phosphohistidine intermediate) is an active-site residue. Glu88 serves as the catalytic Proton donor/acceptor.

The protein belongs to the phosphoglycerate mutase family. BPG-dependent PGAM subfamily. Homodimer.

It catalyses the reaction (2R)-2-phosphoglycerate = (2R)-3-phosphoglycerate. Its pathway is carbohydrate degradation; glycolysis; pyruvate from D-glyceraldehyde 3-phosphate: step 3/5. Functionally, catalyzes the interconversion of 2-phosphoglycerate and 3-phosphoglycerate. In Rhizobium meliloti (strain 1021) (Ensifer meliloti), this protein is 2,3-bisphosphoglycerate-dependent phosphoglycerate mutase.